A 604-amino-acid polypeptide reads, in one-letter code: ATP-dependent RNA helicase DBP1 (604 aa).

The segment at Met-1 to Gly-79 is disordered. Residues Ser-32–Arg-45 are compositionally biased toward polar residues. A Q motif motif is present at residues Thr-138 to Lys-166. The region spanning Ile-169 to Leu-358 is the Helicase ATP-binding domain. Ala-182–Thr-189 serves as a coordination point for ATP. The DEAD box motif lies at Asp-302–Asp-305. Residues Leu-386–Val-529 form the Helicase C-terminal domain. Residues Phe-535–Ser-591 are disordered. Over residues Asn-541–Ser-552 the composition is skewed to low complexity. A compositionally biased stretch (basic and acidic residues) spans Asn-553 to Trp-565.

Belongs to the DEAD box helicase family. DDX3/DED1 subfamily.

It is found in the cytoplasm. The catalysed reaction is ATP + H2O = ADP + phosphate + H(+). Its function is as follows. ATP-binding RNA helicase involved in translation initiation. Remodels RNA in response to ADP and ATP concentrations by facilitating disruption, but also formation of RNA duplexes. Redundant to DED1, may be required in conditions in which DED1 expression is decreased. The protein is ATP-dependent RNA helicase DBP1 (DBP1) of Candida glabrata (strain ATCC 2001 / BCRC 20586 / JCM 3761 / NBRC 0622 / NRRL Y-65 / CBS 138) (Yeast).